Reading from the N-terminus, the 106-residue chain is YcgL domain-containing protein HCH_02617 (106 aa).

The region spanning 6–90 (RLISIFRSSK…VQDDYMMDVV (85 aa)) is the YcgL domain.

In Hahella chejuensis (strain KCTC 2396), this protein is YcgL domain-containing protein HCH_02617.